A 72-amino-acid chain; its full sequence is Guanine nucleotide-binding protein G(I)/G(S)/G(O) subunit gamma-12 (72 aa).

At Ser-2 the chain carries N-acetylserine. Ser-10 and Ser-26 each carry phosphoserine. Tyr-42 bears the Phosphotyrosine mark. Ser-49 carries the post-translational modification Phosphoserine. Cys-69 bears the Cysteine methyl ester mark. Residue Cys-69 is the site of S-geranylgeranyl cysteine attachment. The propeptide at 70–72 (IIL) is removed in mature form.

Belongs to the G protein gamma family. As to quaternary structure, g proteins are composed of 3 units, alpha, beta and gamma.

It is found in the cell membrane. Functionally, guanine nucleotide-binding proteins (G proteins) are involved as a modulator or transducer in various transmembrane signaling systems. The beta and gamma chains are required for the GTPase activity, for replacement of GDP by GTP, and for G protein-effector interaction. This Mus musculus (Mouse) protein is Guanine nucleotide-binding protein G(I)/G(S)/G(O) subunit gamma-12 (Gng12).